Consider the following 417-residue polypeptide: Queuine tRNA-ribosyltransferase accessory subunit 2 (417 aa).

Residues cysteine 324, cysteine 326, cysteine 329, and histidine 355 each contribute to the Zn(2+) site.

It belongs to the queuine tRNA-ribosyltransferase family. QTRT2 subfamily. As to quaternary structure, heterodimer of a catalytic subunit and an accessory subunit. The cofactor is Zn(2+).

The protein resides in the cytoplasm. In terms of biological role, non-catalytic subunit of the queuine tRNA-ribosyltransferase (TGT) that catalyzes the base-exchange of a guanine (G) residue with queuine (Q) at position 34 (anticodon wobble position) in tRNAs with GU(N) anticodons (tRNA-Asp, -Asn, -His and -Tyr), resulting in the hypermodified nucleoside queuosine (7-(((4,5-cis-dihydroxy-2-cyclopenten-1-yl)amino)methyl)-7-deazaguanosine). In Drosophila pseudoobscura pseudoobscura (Fruit fly), this protein is Queuine tRNA-ribosyltransferase accessory subunit 2.